A 361-amino-acid chain; its full sequence is Putative F-box protein At1g33010 (361 aa).

Positions 4–50 (GNTLDSIPTDLILEIFSRLSAKSVGRLRCLSKLWRKGEWFFFSSLQP) constitute an F-box domain. The interval 308-339 (SIRPTEQKHKPTSTETSMSRKDHQVRTIDQPQ) is disordered.

The sequence is that of Putative F-box protein At1g33010 from Arabidopsis thaliana (Mouse-ear cress).